We begin with the raw amino-acid sequence, 1666 residues long: Probable clathrin heavy chain (1666 aa).

7 WD40-like repeat regions span residues 24-67 (SFGF…RPIS), 68-107 (ADSVILHPKKKIIALKAQRQLQVFDLEAKAKINSYVMNQD), 108-148 (VVYW…SSLN), 149-194 (GTQI…QPLE), 195-255 (SHAS…PEAV), 256-299 (NDFP…VSGE), and 300-328 (SIFVTTAHKSVNGLMAINRKGQVLSVSIN). T392 carries the phosphothreonine modification. Residue S393 is modified to Phosphoserine. CHCR repeat units follow at residues 534–680 (MFNS…QIVV), 683–825 (ATRY…DEEL), 830–969 (LMSV…LLDQ), 975–1120 (VPES…IPDA), 1124–1265 (YLKA…FRLA), 1270–1415 (LNLI…MLLT), and 1418–1561 (LAAL…YECF).

The protein belongs to the clathrin heavy chain family. Clathrin triskelions, composed of 3 heavy chains and 3 light chains, are the basic subunits of the clathrin coat.

It is found in the cytoplasmic vesicle membrane. It localises to the membrane. The protein resides in the coated pit. Its function is as follows. Clathrin is the major protein of the polyhedral coat of coated pits and vesicles. The protein is Probable clathrin heavy chain (chc1) of Schizosaccharomyces pombe (strain 972 / ATCC 24843) (Fission yeast).